Consider the following 173-residue polypeptide: Large ribosomal subunit protein uL16 (173 aa).

This sequence belongs to the universal ribosomal protein uL16 family.

This chain is Large ribosomal subunit protein uL16, found in Methanococcus aeolicus (strain ATCC BAA-1280 / DSM 17508 / OCM 812 / Nankai-3).